Here is a 453-residue protein sequence, read N- to C-terminus: Bifunctional protein GlmU (453 aa).

The segment at 1–225 (MNIVILAAGT…GWETLGVNSK (225 aa)) is pyrophosphorylase. Residues 6–9 (LAAG), lysine 20, glutamine 71, 76–77 (GT), 98–100 (YGD), glycine 135, glutamate 150, asparagine 165, and asparagine 223 contribute to the UDP-N-acetyl-alpha-D-glucosamine site. Mg(2+) is bound at residue aspartate 100. Mg(2+) is bound at residue asparagine 223. The segment at 226–246 (AQLAELERIHQRNLADALLAA) is linker. The interval 247–453 (GVTLADPARI…GYVRPVKKKS (207 aa)) is N-acetyltransferase. Arginine 329 and lysine 347 together coordinate UDP-N-acetyl-alpha-D-glucosamine. Residue histidine 359 is the Proton acceptor of the active site. Tyrosine 362 and asparagine 373 together coordinate UDP-N-acetyl-alpha-D-glucosamine. Residues alanine 376, 382-383 (NY), serine 401, and alanine 419 each bind acetyl-CoA.

This sequence in the N-terminal section; belongs to the N-acetylglucosamine-1-phosphate uridyltransferase family. The protein in the C-terminal section; belongs to the transferase hexapeptide repeat family. As to quaternary structure, homotrimer. Mg(2+) serves as cofactor.

Its subcellular location is the cytoplasm. The catalysed reaction is alpha-D-glucosamine 1-phosphate + acetyl-CoA = N-acetyl-alpha-D-glucosamine 1-phosphate + CoA + H(+). The enzyme catalyses N-acetyl-alpha-D-glucosamine 1-phosphate + UTP + H(+) = UDP-N-acetyl-alpha-D-glucosamine + diphosphate. It participates in nucleotide-sugar biosynthesis; UDP-N-acetyl-alpha-D-glucosamine biosynthesis; N-acetyl-alpha-D-glucosamine 1-phosphate from alpha-D-glucosamine 6-phosphate (route II): step 2/2. Its pathway is nucleotide-sugar biosynthesis; UDP-N-acetyl-alpha-D-glucosamine biosynthesis; UDP-N-acetyl-alpha-D-glucosamine from N-acetyl-alpha-D-glucosamine 1-phosphate: step 1/1. It functions in the pathway bacterial outer membrane biogenesis; LPS lipid A biosynthesis. Catalyzes the last two sequential reactions in the de novo biosynthetic pathway for UDP-N-acetylglucosamine (UDP-GlcNAc). The C-terminal domain catalyzes the transfer of acetyl group from acetyl coenzyme A to glucosamine-1-phosphate (GlcN-1-P) to produce N-acetylglucosamine-1-phosphate (GlcNAc-1-P), which is converted into UDP-GlcNAc by the transfer of uridine 5-monophosphate (from uridine 5-triphosphate), a reaction catalyzed by the N-terminal domain. The polypeptide is Bifunctional protein GlmU (Burkholderia pseudomallei (strain K96243)).